We begin with the raw amino-acid sequence, 36 residues long: Lambda-hexatoxin-Hv1b (36 aa).

Intrachain disulfides connect cysteine 3–cysteine 17, cysteine 10–cysteine 22, cysteine 13–cysteine 14, and cysteine 16–cysteine 33.

Belongs to the neurotoxin 11 (kappa toxin) family. In terms of tissue distribution, expressed by the venom gland.

It is found in the secreted. Its function is as follows. This excitatory toxin inhibits insect calcium-activated potassium (KCa) channels (Slo-type). This Hadronyche versuta (Blue mountains funnel-web spider) protein is Lambda-hexatoxin-Hv1b.